Here is a 756-residue protein sequence, read N- to C-terminus: MQHRKELQARTRDQLQTLELSTSLYDTAWVAMVPLRGSRQHPCFPQCVEWILQNQQDDGSWGTRGFGVAVTRDVLSSTLACVLALKRWNVGQEHIRRGLDFIGRNFSIAMDEQIAAPVGFNITFPGMLSLAMGMDLEFPVRQTDVDRLLHLREIELEREAGDHSYGRKAYMAYVTEGLGNLLEWDEIMMFQRKNGSFFNCPSTTAATLVNHYNDKALQYLNCLVSKFGSAVPTVYPLNIYCQLSWVDALEKMGISQYFVSEIKSILDTTYVSWLERDEEIMLDITTCAMAFRLLRMNGYHVSSVELSPVAEASSFRESLQGYLNDKKSLIELYKASKVSKSENESILDSIGSWSGSLLKESVCSNGVKKAPIFEEMKYALKFPFYTTLDRLDHKRNIERFDAKDSQMLKTEYLLPHANQDILALAVEDFSSSQSIYQDELNYLECWVKDEKLDQLPFARQKLTYCYLSAAATIFPRELSEARIAWAKNGVLTTVVDDFFDLGGSKEELENLIALVEKWDGHQEEFYSEQVRIVFSAIYTTVNQLGAKASALQGRDVTKHLTEIWLCLMRSMMTEAEWQRTKYVPTMEEYMANAVVSFALGPIVLPTLYFVGPKLQEDVVRDHEYNELFRLMSTCGRLLNDSQGFERESLEGKLNSVSLLVHHSGGSISIDEAKMKAQKSIDTSRRNLLRLVLGEQGAVPRPCKQLFWKMCKIVHMFYSRTDGFSSPKEMVSAVNAVVKEPLKLKVSDPYGSILSGN.

4 residues coordinate Mg(2+): Asp496, Asp500, Asn639, and Glu647. A DDXXD motif motif is present at residues 496 to 500; that stretch reads DDFFD.

It belongs to the terpene synthase family. It depends on Mg(2+) as a cofactor. In terms of tissue distribution, highly expressed in panicles and at lower levels in leaves and stems.

It is found in the plastid. It localises to the chloroplast. It catalyses the reaction ent-copalyl diphosphate = ent-kaur-16-ene + diphosphate. Its pathway is plant hormone biosynthesis; gibberellin biosynthesis. Functionally, catalyzes the conversion of ent-copalyl diphosphate to the gibberellin precursor ent-kaur-16-ene. The sequence is that of Ent-kaur-16-ene synthase, chloroplastic (KS1) from Oryza sativa subsp. japonica (Rice).